The chain runs to 145 residues: 3-hydroxyacyl-[acyl-carrier-protein] dehydratase FabZ (145 aa).

His-47 is a catalytic residue.

It belongs to the thioester dehydratase family. FabZ subfamily.

It is found in the cytoplasm. The enzyme catalyses a (3R)-hydroxyacyl-[ACP] = a (2E)-enoyl-[ACP] + H2O. In terms of biological role, involved in unsaturated fatty acids biosynthesis. Catalyzes the dehydration of short chain beta-hydroxyacyl-ACPs and long chain saturated and unsaturated beta-hydroxyacyl-ACPs. In Chromohalobacter salexigens (strain ATCC BAA-138 / DSM 3043 / CIP 106854 / NCIMB 13768 / 1H11), this protein is 3-hydroxyacyl-[acyl-carrier-protein] dehydratase FabZ.